The primary structure comprises 158 residues: Transcriptional repressor NrdR (158 aa).

A zinc finger spans residues 3 to 34 (CPFCGSLDTQVIDSRANEAGDAIRRRRRCAAC). The ATP-cone domain occupies 49 to 139 (PQIVKTNGTR…VYKSFKDPDD (91 aa)).

This sequence belongs to the NrdR family. Zn(2+) is required as a cofactor.

In terms of biological role, negatively regulates transcription of bacterial ribonucleotide reductase nrd genes and operons by binding to NrdR-boxes. In Thiobacillus denitrificans (strain ATCC 25259 / T1), this protein is Transcriptional repressor NrdR.